A 619-amino-acid polypeptide reads, in one-letter code: Chaperone protein DnaK (619 aa).

T179 is modified (phosphothreonine; by autocatalysis). The segment at 584 to 619 (QAKAQGAAGPQPGAQAQGQPNDGGKEDVVEAEVVDK) is disordered. The span at 585–605 (AKAQGAAGPQPGAQAQGQPND) shows a compositional bias: low complexity. A compositionally biased stretch (basic and acidic residues) spans 606–619 (GGKEDVVEAEVVDK).

It belongs to the heat shock protein 70 family.

Acts as a chaperone. This chain is Chaperone protein DnaK, found in Elusimicrobium minutum (strain Pei191).